Consider the following 166-residue polypeptide: Large ribosomal subunit protein uL10 (166 aa).

This sequence belongs to the universal ribosomal protein uL10 family. As to quaternary structure, part of the ribosomal stalk of the 50S ribosomal subunit. The N-terminus interacts with L11 and the large rRNA to form the base of the stalk. The C-terminus forms an elongated spine to which L12 dimers bind in a sequential fashion forming a multimeric L10(L12)X complex.

Forms part of the ribosomal stalk, playing a central role in the interaction of the ribosome with GTP-bound translation factors. This chain is Large ribosomal subunit protein uL10, found in Marinomonas sp. (strain MWYL1).